Reading from the N-terminus, the 267-residue chain is Pyrroline-5-carboxylate reductase (267 aa).

Belongs to the pyrroline-5-carboxylate reductase family.

The protein resides in the cytoplasm. It catalyses the reaction L-proline + NADP(+) = (S)-1-pyrroline-5-carboxylate + NADPH + 2 H(+). It carries out the reaction L-proline + NAD(+) = (S)-1-pyrroline-5-carboxylate + NADH + 2 H(+). The protein operates within amino-acid biosynthesis; L-proline biosynthesis; L-proline from L-glutamate 5-semialdehyde: step 1/1. Its function is as follows. Catalyzes the reduction of 1-pyrroline-5-carboxylate (PCA) to L-proline. The chain is Pyrroline-5-carboxylate reductase from Synechocystis sp. (strain ATCC 27184 / PCC 6803 / Kazusa).